The following is a 295-amino-acid chain: Indole-3-glycerol phosphate synthase (295 aa).

This sequence belongs to the TrpC family.

It carries out the reaction 1-(2-carboxyphenylamino)-1-deoxy-D-ribulose 5-phosphate + H(+) = (1S,2R)-1-C-(indol-3-yl)glycerol 3-phosphate + CO2 + H2O. The protein operates within amino-acid biosynthesis; L-tryptophan biosynthesis; L-tryptophan from chorismate: step 4/5. The sequence is that of Indole-3-glycerol phosphate synthase from Prochlorococcus marinus subsp. pastoris (strain CCMP1986 / NIES-2087 / MED4).